Consider the following 612-residue polypeptide: Indole-3-acetic acid-amido synthetase GH3.5 (612 aa).

This sequence belongs to the IAA-amido conjugating enzyme family.

Functionally, catalyzes the synthesis of indole-3-acetic acid (IAA)-amino acid conjugates, providing a mechanism for the plant to cope with the presence of excess auxin. Strongly reactive with Glu, Gln, Trp, Asp, Ala, Leu, Phe, Gly, Tyr, Met, Ile and Val. Little or no product formation with His, Ser, Thr, Arg, Lys, or Cys. Also active on pyruvic and butyric acid analogs of IAA, PAA and the synthetic auxin naphthaleneacetic acid (NAA). The two chlorinated synthetic auxin herbicides 2,4-D and 3,6-dichloro-o-anisic acid (dicamba) cannot be used as substrates. The sequence is that of Indole-3-acetic acid-amido synthetase GH3.5 (GH3.5) from Arabidopsis thaliana (Mouse-ear cress).